A 177-amino-acid polypeptide reads, in one-letter code: Large ribosomal subunit protein uL6 (177 aa).

Residues 151 to 177 form a disordered region; sequence KRPPEPYKGKGVKYADEHIRRKEGKKS. Over residues 152 to 177 the composition is skewed to basic and acidic residues; sequence RPPEPYKGKGVKYADEHIRRKEGKKS.

It belongs to the universal ribosomal protein uL6 family. In terms of assembly, part of the 50S ribosomal subunit.

This protein binds to the 23S rRNA, and is important in its secondary structure. It is located near the subunit interface in the base of the L7/L12 stalk, and near the tRNA binding site of the peptidyltransferase center. The protein is Large ribosomal subunit protein uL6 of Fusobacterium nucleatum subsp. nucleatum (strain ATCC 25586 / DSM 15643 / BCRC 10681 / CIP 101130 / JCM 8532 / KCTC 2640 / LMG 13131 / VPI 4355).